A 76-amino-acid chain; its full sequence is Protein OPG128 (76 aa).

C17 and C21 form a disulfide bridge.

The protein belongs to the orthopoxvirus OPG128 family. As to quaternary structure, interacts with sulfhydryl oxidase OPG072; this interaction involves formation of a transient disulfide-bonded intermediate, allowing disulfide bond transfer. Interacts with OPG088; this interaction involves formation of a transient disulfide-bonded intermediate, allowing disulfide bond transfer.

In terms of biological role, late protein which probably participates in disulfide bond formation by functioning as a thiol-disulfide transfer protein between membrane-associated OPG072 and OPG08. The complete pathway for formation of disulfide bonds in intracellular virion membrane proteins sequentially involves oxidation of OPG072, OPG128 and OPG08. This chain is Protein OPG128 (OPG128), found in Bos taurus (Bovine).